Consider the following 278-residue polypeptide: 4-deoxy-L-threo-5-hexosulose-uronate ketol-isomerase (278 aa).

Residues histidine 196, histidine 198, glutamate 203, and histidine 245 each coordinate Zn(2+).

The protein belongs to the KduI family. Requires Zn(2+) as cofactor.

It carries out the reaction 5-dehydro-4-deoxy-D-glucuronate = 3-deoxy-D-glycero-2,5-hexodiulosonate. Its pathway is glycan metabolism; pectin degradation; 2-dehydro-3-deoxy-D-gluconate from pectin: step 4/5. Catalyzes the isomerization of 5-dehydro-4-deoxy-D-glucuronate to 3-deoxy-D-glycero-2,5-hexodiulosonate. This Shigella flexneri protein is 4-deoxy-L-threo-5-hexosulose-uronate ketol-isomerase.